Consider the following 441-residue polypeptide: G2/mitotic-specific cyclin-2 (441 aa).

This sequence belongs to the cyclin family. Cyclin AB subfamily. In terms of assembly, interacts with the CDC2 and CDK2 protein kinases to form a serine/threonine kinase holoenzyme complex. The cyclin subunit imparts substrate specificity to the complex.

In terms of biological role, essential for the control of the cell cycle at the G2/M (mitosis) transition. G2/M cyclins accumulate steadily during G2 and are abruptly destroyed at mitosis. This chain is G2/mitotic-specific cyclin-2, found in Antirrhinum majus (Garden snapdragon).